The chain runs to 317 residues: Olfactory receptor 2T27 (317 aa).

Over 1-22 the chain is Extracellular; the sequence is MEQSNYSVYADFILLGLFSNAR. A glycan (N-linked (GlcNAc...) asparagine) is linked at Asn-5. The chain crosses the membrane as a helical span at residues 23 to 43; sequence FPWLLFALILLVFLTSIASNV. Residues 44-60 are Cytoplasmic-facing; the sequence is VKIILIHIDSRLHTPMY. Residues 61–83 traverse the membrane as a helical segment; that stretch reads FLLSQLSLRDILYISTIVPKMLV. Residues 84 to 97 lie on the Extracellular side of the membrane; sequence DQVMSQRAISFAGC. A disulfide bridge connects residues Cys-97 and Cys-189. Residues 98-118 form a helical membrane-spanning segment; sequence TAQHFLYLTLAGAEFFLLGLM. Over 119–139 the chain is Cytoplasmic; the sequence is SYDRYVAICNPLHYPVLMSRK. The chain crosses the membrane as a helical span at residues 140–160; sequence ICWLIVAAAWLGGSIDGFLLT. Over 161-197 the chain is Extracellular; sequence PVTMQFPFCASREINHFFCEVPALLKLSCTDTSAYET. A helical membrane pass occupies residues 198 to 218; it reads AMYVCCIMMLLIPFSVISGSY. Over 219 to 244 the chain is Cytoplasmic; that stretch reads TRILITVYRMSEAEGRGKAVATCSSH. A helical membrane pass occupies residues 245 to 265; sequence MVVVSLFYGAAMYTYVLPHSY. Residues 266-271 are Extracellular-facing; the sequence is HTPEQD. The chain crosses the membrane as a helical span at residues 272–292; sequence KAVSAFYTILTPMLNPLIYSL. The Cytoplasmic portion of the chain corresponds to 293 to 317; sequence RNKDVTGALQKVVGRCVSSGKVTTF.

It belongs to the G-protein coupled receptor 1 family.

Its subcellular location is the cell membrane. Its function is as follows. Odorant receptor. The protein is Olfactory receptor 2T27 (OR2T27) of Homo sapiens (Human).